A 294-amino-acid chain; its full sequence is 2-methoxy-6-polyprenyl-1,4-benzoquinol methylase, mitochondrial (294 aa).

Residues 1-10 (MALRSAAGRL) constitute a mitochondrion transit peptide. S-adenosyl-L-methionine is bound by residues Thr-100, Asp-136, and 166–167 (DA).

It belongs to the class I-like SAM-binding methyltransferase superfamily. MenG/UbiE family. Component of a multi-subunit COQ enzyme complex.

It localises to the mitochondrion inner membrane. It catalyses the reaction a 2-methoxy-6-(all-trans-polyprenyl)benzene-1,4-diol + S-adenosyl-L-methionine = a 5-methoxy-2-methyl-3-(all-trans-polyprenyl)benzene-1,4-diol + S-adenosyl-L-homocysteine + H(+). The protein operates within cofactor biosynthesis; ubiquinone biosynthesis. Functionally, methyltransferase required for the conversion of 2-polyprenyl-6-methoxy-1,4-benzoquinol (DDMQH2) to 2-polyprenyl-3-methyl-6-methoxy-1,4-benzoquinol (DMQH2). This Oryza sativa subsp. japonica (Rice) protein is 2-methoxy-6-polyprenyl-1,4-benzoquinol methylase, mitochondrial.